Consider the following 629-residue polypeptide: tRNA uridine 5-carboxymethylaminomethyl modification enzyme MnmG (629 aa).

Residue G14–G19 participates in FAD binding. Position 274-288 (G274–F288) interacts with NAD(+).

The protein belongs to the MnmG family. In terms of assembly, homodimer. Heterotetramer of two MnmE and two MnmG subunits. FAD is required as a cofactor.

The protein resides in the cytoplasm. NAD-binding protein involved in the addition of a carboxymethylaminomethyl (cmnm) group at the wobble position (U34) of certain tRNAs, forming tRNA-cmnm(5)s(2)U34. The protein is tRNA uridine 5-carboxymethylaminomethyl modification enzyme MnmG of Xylella fastidiosa (strain Temecula1 / ATCC 700964).